A 337-amino-acid chain; its full sequence is MEFTDFSKTSFYYPSSQSVWDFGDLAAAERHSLGFMELLSSQQHQDFATVSPHSFLLQTSQPQTQTQPSAKLSSSIIQAPPSEQLVTSKVESLCSDHLLINPPATPNSSSISSASSEALNEEKPKTEDNEEEGGEDQQEKSHTKKQLKAKKNNQKRQREARVAFMTKSEVDHLEDGYRWRKYGQKAVKNSPFPRSYYRCTTASCNVKKRVERSFRDPSTVVTTYEGQHTHISPLTSRPISTGGFFGSSGAASSLGNGCFGFPIDGSTLISPQFQQLVQYHHQQQQQELMSCFGGVNEYLNSHANEYGDDNRVKKSRVLVKDNGLLQDVVPSHMLKEE.

The segment at 100 to 160 (INPPATPNSS…KNNQKRQREA (61 aa)) is disordered. Low complexity predominate over residues 106 to 118 (PNSSSISSASSEA). A compositionally biased stretch (basic residues) spans 142–155 (HTKKQLKAKKNNQK). The WRKY DNA-binding region spans 168 to 233 (SEVDHLEDGY…YEGQHTHISP (66 aa)).

The protein belongs to the WRKY group II-c family.

The protein resides in the nucleus. In terms of biological role, transcription factor. Interacts specifically with the W box (5'-(T)TGAC[CT]-3'), a frequently occurring elicitor-responsive cis-acting element. The sequence is that of WRKY transcription factor 23 (WRKY23) from Arabidopsis thaliana (Mouse-ear cress).